We begin with the raw amino-acid sequence, 31 residues long: Photosystem II reaction center protein T (31 aa).

A helical transmembrane segment spans residues 3–23; the sequence is SAAYILVLALALGVIFFAIAF.

The protein belongs to the PsbT family. As to quaternary structure, PSII is composed of 1 copy each of membrane proteins PsbA, PsbB, PsbC, PsbD, PsbE, PsbF, PsbH, PsbI, PsbJ, PsbK, PsbL, PsbM, PsbT, PsbX, PsbY, PsbZ, Psb30/Ycf12, peripheral proteins PsbO, CyanoQ (PsbQ), PsbU, PsbV and a large number of cofactors. It forms dimeric complexes.

It localises to the cellular thylakoid membrane. Its function is as follows. Found at the monomer-monomer interface of the photosystem II (PS II) dimer, plays a role in assembly and dimerization of PSII. PSII is a light-driven water plastoquinone oxidoreductase, using light energy to abstract electrons from H(2)O, generating a proton gradient subsequently used for ATP formation. This chain is Photosystem II reaction center protein T, found in Trichodesmium erythraeum (strain IMS101).